A 232-amino-acid chain; its full sequence is Ferric nitrobindin-like protein (232 aa).

The span at 1–10 (MSENETSKTG) shows a compositional bias: polar residues. The disordered stretch occupies residues 1 to 33 (MSENETSKTGGNAGVPGSGADAPSLSDSPAISG). The GXWXGXG motif lies at 85-91 (GVWRGEG).

This sequence belongs to the nitrobindin family.

This Corynebacterium efficiens (strain DSM 44549 / YS-314 / AJ 12310 / JCM 11189 / NBRC 100395) protein is Ferric nitrobindin-like protein.